A 547-amino-acid chain; its full sequence is Chaperonin GroEL (547 aa).

Residues 30-33 (TLGP), K51, 87-91 (DGTTT), G415, 479-481 (NAA), and D495 contribute to the ATP site.

Belongs to the chaperonin (HSP60) family. In terms of assembly, forms a cylinder of 14 subunits composed of two heptameric rings stacked back-to-back. Interacts with the co-chaperonin GroES.

Its subcellular location is the cytoplasm. The enzyme catalyses ATP + H2O + a folded polypeptide = ADP + phosphate + an unfolded polypeptide.. Functionally, together with its co-chaperonin GroES, plays an essential role in assisting protein folding. The GroEL-GroES system forms a nano-cage that allows encapsulation of the non-native substrate proteins and provides a physical environment optimized to promote and accelerate protein folding. The polypeptide is Chaperonin GroEL (Pseudomonas savastanoi pv. phaseolicola (strain 1448A / Race 6) (Pseudomonas syringae pv. phaseolicola (strain 1448A / Race 6))).